Here is a 669-residue protein sequence, read N- to C-terminus: Bestrophin-3 (669 aa).

Over 1 to 31 (MTVTYSSKVANATFFGFHRLLLKWRGSIYKL) the chain is Cytoplasmic. Alanine 10 contributes to the Ca(2+) binding site. A helical membrane pass occupies residues 32-51 (LYREFIVFAVLYTAISLVYR). The Extracellular portion of the chain corresponds to 52–60 (LLLTGAQKR). The helical transmembrane segment at 61–82 (YFEKLSIYCDRYAEQIPVTFVL) threads the bilayer. The Cytoplasmic portion of the chain corresponds to 83 to 237 (GFYVTLVVNR…DWVGIPLVYT (155 aa)). A helical membrane pass occupies residues 238-255 (QVVTLAVYTFFFACLIGR). The Extracellular portion of the chain corresponds to 256-274 (QFLDPTKGYVGHDLDLYVP). Residues 275-288 (IFTLLQFFFYAGWL) form a helical membrane-spanning segment. The Cytoplasmic portion of the chain corresponds to 289 to 669 (KVAEQLINPF…GTPQRPRTWF (381 aa)). Positions 293, 296, 301, and 304 each coordinate Ca(2+). 4 disordered regions span residues 399–496 (LSTH…TKMP), 533–560 (QPSG…SAST), 591–627 (TSLG…GAGS), and 646–669 (ILEF…RTWF). The span at 440–451 (NPHRGSPTRKQS) shows a compositional bias: basic residues. Residues 475–492 (RTSTLQSLSPQSSVRSSP) are compositionally biased toward low complexity. Positions 533 to 543 (QPSGTEQQVEP) are enriched in polar residues. The span at 646–656 (ILEFNNEHTGE) shows a compositional bias: basic and acidic residues.

This sequence belongs to the anion channel-forming bestrophin (TC 1.A.46) family. Calcium-sensitive chloride channel subfamily. As to expression, expressed in heart. Expressed in brain, retina/retinal pigment epithelium (RPE) and skeletal muscle. Expressed in acinar cells of parotid glands. Expressed in lung, kidney and testis.

The protein resides in the cell membrane. It catalyses the reaction chloride(in) = chloride(out). Its function is as follows. Ligand-gated anion channel that allows the movement of chloride monoatomic anions across cell membranes when activated by calcium (Ca2+). Does not function as calcium-gated chloride channel. The protein is Bestrophin-3 (Best3) of Mus musculus (Mouse).